A 778-amino-acid polypeptide reads, in one-letter code: Hyperosmolality-gated Ca2+ permeable channel 1.4 (778 aa).

The next 10 helical transmembrane spans lie at 7–27 (IGLA…LFAI), 101–121 (IYLI…SILV), 158–178 (FWAH…VLMK), 375–395 (FVMH…IAFV), 427–447 (FLPG…LMIM), 467–487 (YYIF…SAFE), 512–532 (ATFF…GEIF), 584–604 (PVTP…YLVF), 626–646 (VHGR…GLMS), and 651–671 (VQST…HRFC). Positions 738 to 778 (VVQTKRQRSRRTTVASSNASRGSSQSTPFNQLDLGKGKPET) are disordered. Residues 753 to 763 (SSNASRGSSQS) show a composition bias toward low complexity.

This sequence belongs to the CSC1 (TC 1.A.17) family.

It localises to the membrane. In terms of biological role, acts as an osmosensitive calcium-permeable cation channel. The chain is Hyperosmolality-gated Ca2+ permeable channel 1.4 from Arabidopsis thaliana (Mouse-ear cress).